The following is a 401-amino-acid chain: Riboflavin biosynthesis protein RibBA (401 aa).

Positions 1 to 203 (MTDFQFSKVE…IQQLQEYRRK (203 aa)) are DHBP synthase. Residues 30 to 31 (RE), aspartate 35, 142 to 146 (RNGHT), and glutamate 166 contribute to the D-ribulose 5-phosphate site. Glutamate 31 is a binding site for Mg(2+). Histidine 145 is a binding site for Mg(2+). The interval 204-401 (HDSLVKQISV…QIKMGHMFNF (198 aa)) is GTP cyclohydrolase II. 254–258 (RIHSE) is a GTP binding site. Residues cysteine 259, cysteine 270, and cysteine 272 each coordinate Zn(2+). Residues glutamine 275, 297-299 (EGR), and threonine 319 each bind GTP. Aspartate 331 acts as the Proton acceptor; for GTP cyclohydrolase activity in catalysis. Catalysis depends on arginine 333, which acts as the Nucleophile; for GTP cyclohydrolase activity. Threonine 354 and lysine 359 together coordinate GTP.

It in the N-terminal section; belongs to the DHBP synthase family. In the C-terminal section; belongs to the GTP cyclohydrolase II family. It depends on Mg(2+) as a cofactor. Mn(2+) is required as a cofactor. Requires Zn(2+) as cofactor.

The catalysed reaction is D-ribulose 5-phosphate = (2S)-2-hydroxy-3-oxobutyl phosphate + formate + H(+). It catalyses the reaction GTP + 4 H2O = 2,5-diamino-6-hydroxy-4-(5-phosphoribosylamino)-pyrimidine + formate + 2 phosphate + 3 H(+). Its pathway is cofactor biosynthesis; riboflavin biosynthesis; 2-hydroxy-3-oxobutyl phosphate from D-ribulose 5-phosphate: step 1/1. It participates in cofactor biosynthesis; riboflavin biosynthesis; 5-amino-6-(D-ribitylamino)uracil from GTP: step 1/4. Its function is as follows. Catalyzes the conversion of D-ribulose 5-phosphate to formate and 3,4-dihydroxy-2-butanone 4-phosphate. Functionally, catalyzes the conversion of GTP to 2,5-diamino-6-ribosylamino-4(3H)-pyrimidinone 5'-phosphate (DARP), formate and pyrophosphate. In Actinobacillus pleuropneumoniae serotype 5b (strain L20), this protein is Riboflavin biosynthesis protein RibBA.